An 875-amino-acid chain; its full sequence is Serrate RNA effector molecule homolog (875 aa).

Residues 1-90 (MGDSDDEYDR…RRDWDEHSSD (90 aa)) form a disordered region. Glycine 2 carries the post-translational modification N-acetylglycine. A Phosphoserine modification is found at serine 4. Tyrosine 8 is subject to Phosphotyrosine. The segment covering 8–73 (YDRRRRDKFR…ERFSPPRHEL (66 aa)) has biased composition (basic and acidic residues). Phosphoserine occurs at positions 67, 74, and 136. Lysine 150 is covalently cross-linked (Glycyl lysine isopeptide (Lys-Gly) (interchain with G-Cter in SUMO2)). A disordered region spans residues 272–411 (EEEEQAGKTG…KPKDAAGLEC (140 aa)). A compositionally biased stretch (basic and acidic residues) spans 297–345 (EGERKANDKDEKKEDGKQAENDSSNDDKTKKSEGDGDKEEKKEEAEKEA). Residues 369-386 (SESESEGGQAEEEKEEAE) are compositionally biased toward acidic residues. The span at 387-411 (EALKEKEKPKEEEKEKPKDAAGLEC) shows a compositional bias: basic and acidic residues. Residues serine 492 and serine 539 each carry the phosphoserine modification. Residue threonine 543 is modified to Phosphothreonine. Phosphoserine is present on serine 569. The interval 571–597 (EEEELLGSSGGPPPEEPPKEGNPAEIN) is disordered. A Phosphothreonine modification is found at threonine 670. At serine 678 the chain carries Phosphoserine. Residues arginine 832, arginine 839, and arginine 849 each carry the omega-N-methylarginine modification. The tract at residues 834 to 853 (NYDAFRGQGGYPGKPRNRMV) is disordered.

The protein belongs to the ARS2 family. As to quaternary structure, interacts with CASP8AP2 and ERBB4. Interacts with NCBP1/CBP80 and DROSHA. Interacts with LUZP4. Interacts with NCBP2/CBP20 and NCBP3. Interacts with MTREX. As to expression, widely expressed, with a preference for proliferating cells. Highly expressed in hematopoietic tissues and reduced or absent expression in parenchymal organs like liver and kidney. In the brain, expressed in the subventricular zone by niche astrocytes, ependymal cells and neural stem cells. In this cerebral context, expressed in slowly dividing cells.

Its subcellular location is the nucleus. The protein localises to the nucleoplasm. It localises to the cytoplasm. Its function is as follows. Acts as a mediator between the cap-binding complex (CBC) and the primary microRNAs (miRNAs) processing machinery during cell proliferation. Contributes to the stability and delivery of capped primary miRNA transcripts to the primary miRNA processing complex containing DGCR8 and DROSHA, thereby playing a role in RNA-mediated gene silencing (RNAi) by miRNAs. Binds capped RNAs (m7GpppG-capped RNA); however interaction is probably mediated via its interaction with NCBP1/CBP80 component of the CBC complex. Involved in cell cycle progression at S phase. Does not directly confer arsenite resistance but rather modulates arsenic sensitivity. Independently of its activity on miRNAs, necessary and sufficient to promote neural stem cell self-renewal. Does so by directly binding SOX2 promoter and positively regulating its transcription. This chain is Serrate RNA effector molecule homolog (Srrt), found in Mus musculus (Mouse).